The sequence spans 79 residues: MSEFWHKLGCCVVEKPQPKKRRRRIDRTMIGEPMNFVHLTHIGSGEMGAGDGLAMTGAVQEQMRSKGNRDRPWSNSRGL.

Residues Cys-10 and Cys-11 are each lipidated (S-palmitoyl cysteine). The 14-residue stretch at 30–43 (IGEPMNFVHLTHIG) folds into the CRIB domain. The tract at residues 48–79 (GAGDGLAMTGAVQEQMRSKGNRDRPWSNSRGL) is disordered. Positions 63-72 (MRSKGNRDRP) are enriched in basic and acidic residues.

It belongs to the CDC42SE/SPEC family. In terms of assembly, interacts with CDC42 (in GTP-bound form). Interacts weakly with RAC1 and not at all with RHOA.

The protein localises to the cytoplasm. It localises to the cytoskeleton. It is found in the cell membrane. Probably involved in the organization of the actin cytoskeleton by acting downstream of CDC42, inducing actin filament assembly. Alters CDC42-induced cell shape changes. In activated T-cells, may play a role in CDC42-mediated F-actin accumulation at the immunological synapse. May play a role in early contractile events in phagocytosis in macrophages. This Pongo abelii (Sumatran orangutan) protein is CDC42 small effector protein 1 (CDC42SE1).